Here is a 350-residue protein sequence, read N- to C-terminus: Small ribosomal subunit biogenesis GTPase RsgA (350 aa).

Polar residues predominate over residues methionine 1–asparagine 17. Positions methionine 1–glutamate 27 are disordered. The CP-type G domain occupies threonine 104–phenylalanine 273. GTP is bound by residues asparagine 160 to aspartate 163 and glycine 214 to serine 222. Residues cysteine 297, cysteine 302, histidine 304, and cysteine 310 each contribute to the Zn(2+) site.

The protein belongs to the TRAFAC class YlqF/YawG GTPase family. RsgA subfamily. Monomer. Associates with 30S ribosomal subunit, binds 16S rRNA. Requires Zn(2+) as cofactor.

The protein resides in the cytoplasm. In terms of biological role, one of several proteins that assist in the late maturation steps of the functional core of the 30S ribosomal subunit. Helps release RbfA from mature subunits. May play a role in the assembly of ribosomal proteins into the subunit. Circularly permuted GTPase that catalyzes slow GTP hydrolysis, GTPase activity is stimulated by the 30S ribosomal subunit. This Salmonella typhi protein is Small ribosomal subunit biogenesis GTPase RsgA.